Here is a 143-residue protein sequence, read N- to C-terminus: Sorting nexin-3 (143 aa).

The PX domain occupies 23–140 (NILEIDVINP…SSFLQSPEFK (118 aa)). 5 residues coordinate a 1,2-diacyl-sn-glycero-3-phospho-(1D-myo-inositol-3-phosphate): R66, S68, K92, R97, and R106.

It belongs to the sorting nexin family.

It is found in the cytoplasm. Its subcellular location is the golgi apparatus membrane. It localises to the prevacuolar compartment membrane. Required for retention of late Golgi membrane proteins. Component of the retrieval machinery that functions by direct interaction with the cytosolic tails of certain TGN membrane proteins during the sorting/budding process at the prevacuolar compartment. Binds phosphatidylinositol 3-phosphate (PtdIns(P3)). The sequence is that of Sorting nexin-3 (snx3) from Schizosaccharomyces pombe (strain 972 / ATCC 24843) (Fission yeast).